The sequence spans 544 residues: Chaperonin GroEL (544 aa).

ATP-binding positions include 30-33, Lys51, 87-91, Gly415, 481-483, and Asp497; these read TLGP, DGTTT, and DAL.

It belongs to the chaperonin (HSP60) family. In terms of assembly, forms a cylinder of 14 subunits composed of two heptameric rings stacked back-to-back. Interacts with the co-chaperonin GroES.

The protein resides in the cytoplasm. The catalysed reaction is ATP + H2O + a folded polypeptide = ADP + phosphate + an unfolded polypeptide.. Together with its co-chaperonin GroES, plays an essential role in assisting protein folding. The GroEL-GroES system forms a nano-cage that allows encapsulation of the non-native substrate proteins and provides a physical environment optimized to promote and accelerate protein folding. In Chlamydia felis (strain Fe/C-56) (Chlamydophila felis), this protein is Chaperonin GroEL.